The chain runs to 117 residues: MCRGFEKEEERRSDNGGCQRLCTESHKAPVSCELCGENATVYCEADAAFLCRKCDRWVHSANFLARRHLRRVICTTCRKLTRRCLVGDNFNVVLPEIRMIARIEEHSSDHKIPFVFL.

The segment at Lys27–Ile73 adopts a B box-type; atypical zinc-finger fold. The Zn(2+) site is built by Cys32, Cys35, Cys54, and His59. The PFVFL motif lies at Pro113–Leu117.

Interacts with CO (via B-box) and with TPL (via PFVFL motif). As to expression, highly expressed in shoot apical meristems and in vascular tissues of leaves. Also detected in petioles.

Its subcellular location is the nucleus. Functionally, developmental regulator acting by forming heterodimeric complexes, that sequester CO and CO-like (COL) proteins into non-functional complexes. Engages CO and the transcriptional repressor TPL in a tripartite complex. Involved in the CO-mediated long-day flowering-promotion pathway. This is B-box domain protein 30 from Arabidopsis thaliana (Mouse-ear cress).